The chain runs to 72 residues: Translation initiation factor IF-1 (72 aa).

The S1-like domain maps to 1-72; the sequence is MAKEDNIEMQ…SKGRIVFRAR (72 aa).

Belongs to the IF-1 family. In terms of assembly, component of the 30S ribosomal translation pre-initiation complex which assembles on the 30S ribosome in the order IF-2 and IF-3, IF-1 and N-formylmethionyl-tRNA(fMet); mRNA recruitment can occur at any time during PIC assembly.

Its subcellular location is the cytoplasm. Its function is as follows. One of the essential components for the initiation of protein synthesis. Stabilizes the binding of IF-2 and IF-3 on the 30S subunit to which N-formylmethionyl-tRNA(fMet) subsequently binds. Helps modulate mRNA selection, yielding the 30S pre-initiation complex (PIC). Upon addition of the 50S ribosomal subunit IF-1, IF-2 and IF-3 are released leaving the mature 70S translation initiation complex. This chain is Translation initiation factor IF-1, found in Shewanella frigidimarina (strain NCIMB 400).